The primary structure comprises 276 residues: Orotidine 5'-phosphate decarboxylase (276 aa).

The Proton donor role is filled by Lys-96.

The protein belongs to the OMP decarboxylase family. Type 2 subfamily.

It catalyses the reaction orotidine 5'-phosphate + H(+) = UMP + CO2. It participates in pyrimidine metabolism; UMP biosynthesis via de novo pathway; UMP from orotate: step 2/2. In Porphyromonas gingivalis (strain ATCC 33277 / DSM 20709 / CIP 103683 / JCM 12257 / NCTC 11834 / 2561), this protein is Orotidine 5'-phosphate decarboxylase.